The chain runs to 353 residues: 3-isopropylmalate dehydrogenase (353 aa).

NAD(+) is bound at residue 76–89 (GPKWDDPRAKVRPE). Substrate is bound by residues Arg-96, Arg-106, Arg-134, and Asp-223. Residues Asp-223, Asp-247, and Asp-251 each coordinate Mg(2+). 281-293 (GSAPDIAGKGIAN) is an NAD(+) binding site.

The protein belongs to the isocitrate and isopropylmalate dehydrogenases family. LeuB type 1 subfamily. Homodimer. Mg(2+) serves as cofactor. Requires Mn(2+) as cofactor.

The protein resides in the cytoplasm. The catalysed reaction is (2R,3S)-3-isopropylmalate + NAD(+) = 4-methyl-2-oxopentanoate + CO2 + NADH. Its pathway is amino-acid biosynthesis; L-leucine biosynthesis; L-leucine from 3-methyl-2-oxobutanoate: step 3/4. Catalyzes the oxidation of 3-carboxy-2-hydroxy-4-methylpentanoate (3-isopropylmalate) to 3-carboxy-4-methyl-2-oxopentanoate. The product decarboxylates to 4-methyl-2 oxopentanoate. The chain is 3-isopropylmalate dehydrogenase from Anaeromyxobacter dehalogenans (strain 2CP-C).